The sequence spans 410 residues: S-adenosylmethionine synthase (410 aa).

Histidine 21 contacts ATP. Aspartate 23 lines the Mg(2+) pocket. Glutamate 49 contacts K(+). L-methionine-binding residues include glutamate 62 and glutamine 105. Residues 105 to 115 (QSQEIGAGVDQ) form a flexible loop region. Positions 107-133 (QEIGAGVDQSHEVRSGENTDADDQAGA) are disordered. ATP-binding positions include 180-182 (DGK), aspartate 261, 267-268 (RK), alanine 284, and lysine 288. Aspartate 261 lines the L-methionine pocket. An L-methionine-binding site is contributed by lysine 292.

The protein belongs to the AdoMet synthase family. Homotetramer; dimer of dimers. Requires Mg(2+) as cofactor. K(+) serves as cofactor.

The protein resides in the cytoplasm. The enzyme catalyses L-methionine + ATP + H2O = S-adenosyl-L-methionine + phosphate + diphosphate. Its pathway is amino-acid biosynthesis; S-adenosyl-L-methionine biosynthesis; S-adenosyl-L-methionine from L-methionine: step 1/1. In terms of biological role, catalyzes the formation of S-adenosylmethionine (AdoMet) from methionine and ATP. The overall synthetic reaction is composed of two sequential steps, AdoMet formation and the subsequent tripolyphosphate hydrolysis which occurs prior to release of AdoMet from the enzyme. This chain is S-adenosylmethionine synthase, found in Corynebacterium diphtheriae (strain ATCC 700971 / NCTC 13129 / Biotype gravis).